The chain runs to 76 residues: Tautomerase PptA (76 aa).

The active-site Proton acceptor; via imino nitrogen is the proline 2.

Belongs to the 4-oxalocrotonate tautomerase family. PptA subfamily. In terms of assembly, homodimer.

The protein resides in the cytoplasm. The protein is Tautomerase PptA of Pectobacterium atrosepticum (strain SCRI 1043 / ATCC BAA-672) (Erwinia carotovora subsp. atroseptica).